A 110-amino-acid polypeptide reads, in one-letter code: Red pigment-concentrating prohormone (110 aa).

The first 25 residues, 1–25 (MVRRTGVTLLVVALVVVALVSSVSA), serve as a signal peptide directing secretion. At Gln26 the chain carries Pyrrolidone carboxylic acid. At Trp33 the chain carries Tryptophan amide.

This sequence belongs to the AKH/HRTH/RPCH family.

It localises to the secreted. Functionally, this hormone adapts the animal to light backgrounds by stimulating concentration of the pigment of its red body-chromatophores. The chain is Red pigment-concentrating prohormone from Carcinus maenas (Common shore crab).